Consider the following 214-residue polypeptide: tRNA (guanine-N(7)-)-methyltransferase (214 aa).

The S-adenosyl-L-methionine site is built by Glu-44, Glu-69, Asp-96, and Asp-118. Asp-118 is an active-site residue. Substrate contacts are provided by residues Lys-122, Asp-154, and 191-194 (TEYE).

Belongs to the class I-like SAM-binding methyltransferase superfamily. TrmB family.

The catalysed reaction is guanosine(46) in tRNA + S-adenosyl-L-methionine = N(7)-methylguanosine(46) in tRNA + S-adenosyl-L-homocysteine. Its pathway is tRNA modification; N(7)-methylguanine-tRNA biosynthesis. In terms of biological role, catalyzes the formation of N(7)-methylguanine at position 46 (m7G46) in tRNA. The polypeptide is tRNA (guanine-N(7)-)-methyltransferase (Listeria welshimeri serovar 6b (strain ATCC 35897 / DSM 20650 / CCUG 15529 / CIP 8149 / NCTC 11857 / SLCC 5334 / V8)).